The following is a 72-amino-acid chain: Small ribosomal subunit protein bS18 (72 aa).

Belongs to the bacterial ribosomal protein bS18 family. Part of the 30S ribosomal subunit. Forms a tight heterodimer with protein bS6.

In terms of biological role, binds as a heterodimer with protein bS6 to the central domain of the 16S rRNA, where it helps stabilize the platform of the 30S subunit. The polypeptide is Small ribosomal subunit protein bS18 (Trichodesmium erythraeum (strain IMS101)).